We begin with the raw amino-acid sequence, 329 residues long: Succinylglutamate desuccinylase (329 aa).

Zn(2+)-binding residues include His53, Glu56, and His148. Residue Glu211 is part of the active site.

This sequence belongs to the AspA/AstE family. Succinylglutamate desuccinylase subfamily. Requires Zn(2+) as cofactor.

It catalyses the reaction N-succinyl-L-glutamate + H2O = L-glutamate + succinate. It functions in the pathway amino-acid degradation; L-arginine degradation via AST pathway; L-glutamate and succinate from L-arginine: step 5/5. Its function is as follows. Transforms N(2)-succinylglutamate into succinate and glutamate. This is Succinylglutamate desuccinylase from Erwinia tasmaniensis (strain DSM 17950 / CFBP 7177 / CIP 109463 / NCPPB 4357 / Et1/99).